The chain runs to 295 residues: Indole-3-glycerol phosphate synthase (295 aa).

The protein belongs to the TrpC family.

The catalysed reaction is 1-(2-carboxyphenylamino)-1-deoxy-D-ribulose 5-phosphate + H(+) = (1S,2R)-1-C-(indol-3-yl)glycerol 3-phosphate + CO2 + H2O. It participates in amino-acid biosynthesis; L-tryptophan biosynthesis; L-tryptophan from chorismate: step 4/5. This Prochlorococcus marinus (strain MIT 9211) protein is Indole-3-glycerol phosphate synthase.